The sequence spans 553 residues: MSKPRKQQKCKTCGHTQFDVNRYTAAGDVSCLRCGTVLEENPIVSEVQFGESSSGAAMVQGAMVGADQARATFAGGRQNAMESREQTLSNGKRKIKRIAAALKIPDYIAEAAGEWFRLALTLNFVQGRRSNNVLATCLYVACRKERTHHMLIDFSSRLQISVYSLGATFLKMVKALHITSLPLADPSLFIQHFVEKLDFKDKATKVAKDAVKLAHRMAADWIHEGRRPAGIAGACVLLAARMNNFRRSHAEIVAVSHVGEETLQRRLNEFKKTKAGTLSVKSFREVENLESSNPPSFEKNRAMELKISKKLQQQQTDNFEDLSKMTEEEKQSVFGKLSKEEAQKQLLMNTILSDITITTENLNDQMDRILKMKKSSLENSLYKTPYELALANGSEQDPSKIWNINKPKNLVANLPKTDDILQNVSSEVELNSDDDDEIVLESKLTEEEVAIKERIWTGLNHDYLVEQEKKRLKQEADELTGNTSKSSSGNRRKRNKSSLPAELRKELGDIDLDEDGTPRSAADSAKMYISKTSVSKKINYDSLKGLLGGNMGF.

Residues 6 to 39 (KQQKCKTCGHTQFDVNRYTAAGDVSCLRCGTVLE) form a TFIIB-type zinc finger. Zn(2+) contacts are provided by Cys10, Cys13, Cys31, and Cys34. 2 tandem repeats follow at residues 98–174 (IAAA…KMVK) and 193–272 (FVEK…EFKK). The segment at 98-272 (IAAALKIPDY…LQRRLNEFKK (175 aa)) is interaction with TBP and with the Pol III subunit C34. Positions 281-553 (KSFREVENLE…KGLLGGNMGF (273 aa)) are interaction with TBP. The segment at 473–523 (KQEADELTGNTSKSSSGNRRKRNKSSLPAELRKELGDIDLDEDGTPRSAAD) is disordered. Low complexity predominate over residues 480–489 (TGNTSKSSSG).

This sequence belongs to the TFIIB family. As to quaternary structure, TFIIIB comprises the TATA-binding protein (TBP), the B-related factor (BRF) and a 70 kDa polypeptide.

The protein localises to the nucleus. Its function is as follows. General activator of RNA polymerase III transcription. Interacts with TBP. Binds to Pol III subunit C34 and to the TAU135 component of TFIIIC. This is Transcription factor IIIB 70 kDa subunit (TDS4) from Candida albicans (strain SC5314 / ATCC MYA-2876) (Yeast).